A 78-amino-acid polypeptide reads, in one-letter code: Hainantoxin-XX.2 (78 aa).

The first 23 residues, 1–23 (MKSATLLALSYLLIALYFLICEA), serve as a signal peptide directing secretion. Positions 24-47 (EHSRYEEHEILEENMGDVVNLEQR) are excised as a propeptide. Intrachain disulfides connect Cys49–Cys62, Cys56–Cys66, and Cys61–Cys77.

Belongs to the hainantoxin family. 20 subfamily. As to expression, expressed by the venom gland.

It localises to the secreted. Its function is as follows. Moderately inhibits Kv1.1/KCNA1 and Kv1.2/KCNA2 and weakly inhibits Kv1.3/KCNA3, and Kv2.1/KCNB1 voltage-gated potassium channels. This is Hainantoxin-XX.2 from Cyriopagopus hainanus (Chinese bird spider).